Here is a 145-residue protein sequence, read N- to C-terminus: Protein ImpA (145 aa).

Residues serine 64 and lysine 101 each act as for autocatalytic cleavage activity in the active site.

Belongs to the peptidase S24 family.

Involved in UV protection and mutation. The sequence is that of Protein ImpA from Escherichia coli.